Here is a 470-residue protein sequence, read N- to C-terminus: Myricetin 3-O-rhamnoside 1,2-glucosyltransferase UGT709G2 (470 aa).

The Proton acceptor role is filled by histidine 20. Position 20 (histidine 20) interacts with an anthocyanidin. The Charge relay role is filled by aspartate 117. Residues alanine 340, glutamine 342, histidine 357, tryptophan 360, asparagine 361, serine 362, and glutamate 365 each contribute to the UDP-alpha-D-glucose site. Residue alanine 380 coordinates an anthocyanidin. UDP-alpha-D-glucose is bound by residues aspartate 381 and glutamine 382.

It belongs to the UDP-glycosyltransferase family. In terms of tissue distribution, expressed in young cromes.

The enzyme catalyses myricetin 3-O-alpha-L-rhamnoside + UDP-alpha-D-glucose = myricetin 3-O-[beta-D-glucosyl-(1-&gt;2)-alpha-L-rhamnoside] + UDP + H(+). Its pathway is flavonoid metabolism. In terms of biological role, glucosyltransferase involved in montbretin A (MbA) biosynthesis. Catalyzes the glucosylation of myricetin 3-O-alpha-L-rhamnoside (MR) to produce myricetin 3-O-[beta-D-glucosyl-(1-&gt;2)-alpha-L-rhamnoside] (MRG), a precursor of MbA. MbA is a potent inhibitor of human pancreatic alpha-amylase and is being developed as drug candidate to treat type-2 diabetes. In vitro, is able to transfer UDP-xylose with 50-fold less efficiency compared with UDP-glucose. In vitro, can use myricetin 3-O-glucoside and quercetin 3-O-glucoside as substrates, although these two flavonoids may not be physiological substrates in vivo. This is Myricetin 3-O-rhamnoside 1,2-glucosyltransferase UGT709G2 from Crocosmia x crocosmiiflora (Montbretia).